The sequence spans 286 residues: Undecaprenyl-diphosphatase (286 aa).

7 helical membrane passes run Phe-43 to Phe-63, Leu-91 to Gly-111, Ile-118 to Phe-138, Met-150 to Gly-170, Ala-189 to Tyr-209, Ile-236 to Phe-256, and Gly-264 to Leu-284.

This sequence belongs to the UppP family.

Its subcellular location is the cell inner membrane. The enzyme catalyses di-trans,octa-cis-undecaprenyl diphosphate + H2O = di-trans,octa-cis-undecaprenyl phosphate + phosphate + H(+). Catalyzes the dephosphorylation of undecaprenyl diphosphate (UPP). Confers resistance to bacitracin. The protein is Undecaprenyl-diphosphatase of Koribacter versatilis (strain Ellin345).